The chain runs to 459 residues: ATP-dependent protease ATPase subunit HslU (459 aa).

ATP contacts are provided by residues V18, 60–65 (GVGKTE), D272, E337, and R409.

It belongs to the ClpX chaperone family. HslU subfamily. In terms of assembly, a double ring-shaped homohexamer of HslV is capped on each side by a ring-shaped HslU homohexamer. The assembly of the HslU/HslV complex is dependent on binding of ATP.

It is found in the cytoplasm. Its function is as follows. ATPase subunit of a proteasome-like degradation complex; this subunit has chaperone activity. The binding of ATP and its subsequent hydrolysis by HslU are essential for unfolding of protein substrates subsequently hydrolyzed by HslV. HslU recognizes the N-terminal part of its protein substrates and unfolds these before they are guided to HslV for hydrolysis. This chain is ATP-dependent protease ATPase subunit HslU, found in Thermoanaerobacter pseudethanolicus (strain ATCC 33223 / 39E) (Clostridium thermohydrosulfuricum).